The primary structure comprises 186 residues: LIM domain-containing protein DDB_G0271356 (186 aa).

LIM zinc-binding domains are found at residues 7–67 (PECY…DKFA), 68–127 (PKCQ…KIGF), and 128–186 (LCRH…KLYG).

The protein is LIM domain-containing protein DDB_G0271356 of Dictyostelium discoideum (Social amoeba).